The sequence spans 240 residues: Zinc finger CCCH domain-containing protein 52 (240 aa).

Disordered stretches follow at residues 1–37 and 81–106; these read MDAR…GLGS and SQVS…PGSG. Residues 36 to 64 form a C3H1-type 1 zinc finger; that stretch reads GSKSKPCTKFFSTSGCPFGDNCHFLHYVP. Gly residues predominate over residues 89–104; that stretch reads GSGGPGGRFSGRGDPG. Residues 113–177 enclose the KH domain; sequence ASTSKISVDA…EQINVASGMV (65 aa). The segment at 205 to 232 adopts a C3H1-type 2 zinc-finger fold; it reads NYKTKICDRYSKGNCTYGDRCHFAHGES.

The polypeptide is Zinc finger CCCH domain-containing protein 52 (Arabidopsis thaliana (Mouse-ear cress)).